Here is an 890-residue protein sequence, read N- to C-terminus: MEKVKLTKNLKLKIKNAQLTKAAGLDKLKQKLAQAGSSEAKSSSEKPSAKEKSVKVALAATSTPTASAEQASPESTSRRIRAKNRSSFSSSEEESSAHIPVDTSEPAPVSIADPEPELEVVDEVCDESPEVHPVAEVLPEQPVLPETPPQEKELEPKPVKPAEPKSVVMIKSKFGPTGKHINHLLAKTFKAPAKEEKVVAGSKSTKPVASDKTGKPGTSEGGEQNNREKQFNPANRSPASGPKRDAGKKNLTDFRDRSKKSDESLKAFTGRDRYGLNEGGEEDRWRKKRVYKPKKHYDEASIQRPTHIKISLPITVKDLATEMKLKASEVIQKLFIHGMTYVVNDILDSETAVQFIGLEFGCTIDIDYSEQDKLCLSNDTVRDEIQSTDPSKLVIRSPIVAFMGHVDHGKTTLIDSLRKSNVAATEAGAITQHMGAFCCSTPVGDITILDTPGHEAFSAMRARGAEVCDIVVLVVAGDEGIKEQTLEAIEHAKAADIAIVVAINKCDKPNFNSETIYRQLSEINLLPEAWGGSTVTVNTSAKTGEGLSELLEMLALQAEVLELKADPSARARGLVIESELHKGLGPVATVLIQNGSLKLGEALVFNDCYGKVKTMHNEHNELMKEAGPSIPVLITGLSDIPKAGDPFFVVKNEKTARDIIEARSAGQQRFALQQKKRPNFDSMLQNKKTLKLMIKADVQGSIEALVSSISKIKSEKVDVEILTNSVGEISESDIRLAAASKAVLIGFHTGIESHAEPLIKSLGVRVELFTVIYHAIDAIKEIMTSLLDPIAEEKDEGSAEIKEIFRSSQVGSIYGCIVTEGIMTRNHKVRVLRNKEILWKGTLSSLKRVKEDVKEVRKGLECGILLEGYQQAQIGDVLQCYEVIYHPQKL.

2 disordered regions span residues 31–164 and 189–266; these read KLAQ…PAEP and FKAP…ESLK. Over residues 42-54 the composition is skewed to basic and acidic residues; the sequence is SSSEKPSAKEKSV. Residues 55–72 are compositionally biased toward low complexity; the sequence is KVALAATSTPTASAEQAS. A compositionally biased stretch (acidic residues) spans 114–128; the sequence is PEPELEVVDEVCDES. Composition is skewed to basic and acidic residues over residues 149–163 and 242–266; these read PQEK…KPAE and PKRD…ESLK. Residues 395–564 form the tr-type G domain; the sequence is IRSPIVAFMG…ALQAEVLELK (170 aa). Residues 404–411 are G1; that stretch reads GHVDHGKT. 404 to 411 provides a ligand contact to GTP; the sequence is GHVDHGKT. The tract at residues 429-433 is G2; it reads AITQH. Residues 450 to 453 are G3; sequence DTPG. GTP is bound by residues 450–454 and 504–507; these read DTPGH and NKCD. Positions 504-507 are G4; that stretch reads NKCD. The G5 stretch occupies residues 540–542; that stretch reads SAK.

The protein belongs to the TRAFAC class translation factor GTPase superfamily. Classic translation factor GTPase family. IF-2 subfamily.

Its subcellular location is the cytoplasm. In terms of biological role, one of the essential components for the initiation of protein synthesis. Protects formylmethionyl-tRNA from spontaneous hydrolysis and promotes its binding to the 30S ribosomal subunits. Also involved in the hydrolysis of GTP during the formation of the 70S ribosomal complex. The polypeptide is Translation initiation factor IF-2 (infB) (Chlamydia pneumoniae (Chlamydophila pneumoniae)).